The sequence spans 197 residues: Lactoylglutathione lyase-like protein terB (197 aa).

The signal sequence occupies residues 1–19; the sequence is MARFAVLQLLLPLAAGLTG. 3 N-linked (GlcNAc...) asparagine glycosylation sites follow: asparagine 82, asparagine 99, and asparagine 140.

It belongs to the glyoxalase I family.

Its function is as follows. Lactoylglutathione lyase-like protein; part of the gene cluster that mediates the biosynthesis of terrein, a fungal metabolite with ecological, antimicrobial, antiproliferative, and antioxidative activities. The first step in the pathway is performed by the polyketide synthase terA that produces 4-hydroxy-6-methylpyranon (4-HMP), orsellinic acid (OA), and 2,3-dehydro-6-hydroxymellein (2,3-dehydro-6-HM) by condensing acetyl-CoA with two, three, or four malonyl-CoA units, respectively. 4-HMP and OA are not pathway intermediates, but are rather shunt or side products. 2,3-dehydro-6-HM is further converted to 6-hydroxymellein (6-HM) by the 6-hydroxymellein synthase terB. The monooxygenases terC and terD, the multicopper oxidase terE and the Kelch-like protein terF are then involved in the transformation of 6-HM to terrein. Even if they are co-regulated with the other terrein cluster genes, terH and terI seem to be dispensable for terrein production; whereas one or both of the 2 transporters terG and terJ are probably required for efficient secretion of metabolites. This is Lactoylglutathione lyase-like protein terB from Aspergillus terreus (strain NIH 2624 / FGSC A1156).